The chain runs to 503 residues: Anhydrotetracycline monooxygenase (503 aa).

This sequence belongs to the PheA/TfdB FAD monooxygenase family. FAD is required as a cofactor.

It catalyses the reaction anhydrotetracycline + NADPH + O2 + H(+) = 5a,11a-dehydrotetracycline + NADP(+) + H2O. It functions in the pathway antibiotic biosynthesis; oxytetracycline biosynthesis. Functionally, catalyzes hydroxylation of the anthracycline structure at position C-6 during the biosynthesis of oxytetracyline. This Streptomyces rimosus protein is Anhydrotetracycline monooxygenase.